A 93-amino-acid chain; its full sequence is UPF0367 protein ssl1972 (93 aa).

The protein belongs to the UPF0367 family.

The polypeptide is UPF0367 protein ssl1972 (Synechocystis sp. (strain ATCC 27184 / PCC 6803 / Kazusa)).